Consider the following 647-residue polypeptide: LIM domain kinase 1 (647 aa).

2 LIM zinc-binding domains span residues 25 to 75 (CASC…CKKD) and 84 to 137 (CHGC…CGQC). Residues 165-258 (LVSIPASAHG…LLQLTLEHDP (94 aa)) enclose the PDZ domain. Ser-210 is modified (phosphoserine). Thr-229 carries the phosphothreonine modification. The interval 256 to 316 (HDPHDSLGHG…SLVSPASQRK (61 aa)) is disordered. Polar residues predominate over residues 278–289 (HTPSGQAGSSAR). Phosphoserine is present on residues Ser-298, Ser-302, Ser-307, and Ser-310. Ser-323 is modified (phosphoserine; by MAPKAPK2). Ser-337 carries the phosphoserine modification. The 266-residue stretch at 339 to 604 (LIHGEVLGKG…PSFVKLEQWL (266 aa)) folds into the Protein kinase domain. ATP contacts are provided by residues 345 to 353 (LGKGCFGQA) and Lys-368. The active site involves Asp-460. At Thr-508 the chain carries Phosphothreonine; by ROCK1 and PAK1.

The protein belongs to the protein kinase superfamily. TKL Ser/Thr protein kinase family. Interacts (via LIM domain) with the cytoplasmic domain of NRG1. Interacts with NISCH. Interacts with RLIM and RNF6. Self-associates to form homodimers. Interacts with HSP90AA1; this interaction promotes LIMK1 dimerization and subsequent transphosphorylation. Interacts with CDKN1C. Interacts with SSH1. Interacts with ROCK1. Interacts (via LIM zinc-binding domains) with FAM89B/LRAP25 (via LRR repeat). Forms a tripartite complex with CDC42BPA, CDC42BPB and FAM89B/LRAP25. Post-translationally, autophosphorylated. Phosphorylated on Thr-508 by ROCK1 and PAK1, resulting in activation. Phosphorylated by PAK4 which increases the ability of LIMK1 to phosphorylate cofilin. Phosphorylated at Ser-323 by MAPKAPK2 during activation of VEGFA-induced signaling, which results in activation of LIMK1 and promotion of actin reorganization, cell migration, and tubule formation of endothelial cells. Dephosphorylated and inactivated by SSH1. Phosphorylated by CDC42BP. In terms of processing, ubiquitinated. 'Lys-48'-linked polyubiquitination by RNF6 leads to proteasomal degradation through the 26S proteasome, modulating LIMK1 levels in the growth cone and its effect on axonal outgrowth. Also polyubiquitinated by RLIM.

Its subcellular location is the cytoplasm. It localises to the nucleus. It is found in the cytoskeleton. The protein resides in the cell projection. The protein localises to the lamellipodium. The enzyme catalyses L-seryl-[protein] + ATP = O-phospho-L-seryl-[protein] + ADP + H(+). It carries out the reaction L-threonyl-[protein] + ATP = O-phospho-L-threonyl-[protein] + ADP + H(+). Its function is as follows. Serine/threonine-protein kinase that plays an essential role in the regulation of actin filament dynamics. Acts downstream of several Rho family GTPase signal transduction pathways. Activated by upstream kinases including ROCK1, PAK1 and PAK4, which phosphorylate LIMK1 on a threonine residue located in its activation loop. LIMK1 subsequently phosphorylates and inactivates the actin binding/depolymerizing factors cofilin-1/CFL1, cofilin-2/CFL2 and destrin/DSTN, thereby preventing the cleavage of filamentous actin (F-actin), and stabilizing the actin cytoskeleton. In this way LIMK1 regulates several actin-dependent biological processes including cell motility, cell cycle progression, and differentiation. Phosphorylates TPPP on serine residues, thereby promoting microtubule disassembly. Stimulates axonal outgrowth and may be involved in brain development. This Rattus norvegicus (Rat) protein is LIM domain kinase 1 (Limk1).